We begin with the raw amino-acid sequence, 199 residues long: Shikimate kinase (199 aa).

Residue Gly34–Ala39 participates in ATP binding. Residue Thr38 coordinates Mg(2+). Positions 56, 80, and 102 each coordinate substrate. Arg140 serves as a coordination point for ATP. Position 159 (Arg159) interacts with substrate.

This sequence belongs to the shikimate kinase family. In terms of assembly, monomer. It depends on Mg(2+) as a cofactor.

The protein localises to the cytoplasm. The enzyme catalyses shikimate + ATP = 3-phosphoshikimate + ADP + H(+). It functions in the pathway metabolic intermediate biosynthesis; chorismate biosynthesis; chorismate from D-erythrose 4-phosphate and phosphoenolpyruvate: step 5/7. In terms of biological role, catalyzes the specific phosphorylation of the 3-hydroxyl group of shikimic acid using ATP as a cosubstrate. This Cereibacter sphaeroides (strain ATCC 17023 / DSM 158 / JCM 6121 / CCUG 31486 / LMG 2827 / NBRC 12203 / NCIMB 8253 / ATH 2.4.1.) (Rhodobacter sphaeroides) protein is Shikimate kinase.